We begin with the raw amino-acid sequence, 268 residues long: Ribosome maturation factor RimP (268 aa).

2 disordered regions span residues 1–41 (MGSA…GRGG) and 223–268 (LVEP…EMTR). A compositionally biased stretch (low complexity) spans 32-41 (PSGSARGRGG). Residues 248–257 (ESNDDGREAG) are compositionally biased toward basic and acidic residues.

Belongs to the RimP family.

It is found in the cytoplasm. Required for maturation of 30S ribosomal subunits. The sequence is that of Ribosome maturation factor RimP from Frankia casuarinae (strain DSM 45818 / CECT 9043 / HFP020203 / CcI3).